Here is a 278-residue protein sequence, read N- to C-terminus: tRNA (guanine-N(7)-)-methyltransferase (278 aa).

S-adenosyl-L-methionine contacts are provided by residues glycine 95, 118 to 119 (EI), 153 to 154 (NA), and cysteine 173. Aspartate 176 is an active-site residue. 251–253 (TEE) contacts S-adenosyl-L-methionine.

Belongs to the class I-like SAM-binding methyltransferase superfamily. TrmB family. As to quaternary structure, forms a complex with TRM82.

Its subcellular location is the nucleus. The enzyme catalyses guanosine(46) in tRNA + S-adenosyl-L-methionine = N(7)-methylguanosine(46) in tRNA + S-adenosyl-L-homocysteine. Its pathway is tRNA modification; N(7)-methylguanine-tRNA biosynthesis. In terms of biological role, catalyzes the formation of N(7)-methylguanine at position 46 (m7G46) in tRNA. This Kluyveromyces lactis (strain ATCC 8585 / CBS 2359 / DSM 70799 / NBRC 1267 / NRRL Y-1140 / WM37) (Yeast) protein is tRNA (guanine-N(7)-)-methyltransferase.